The primary structure comprises 469 residues: 3-isopropylmalate dehydratase large subunit (469 aa).

Cysteine 347, cysteine 407, and cysteine 410 together coordinate [4Fe-4S] cluster.

The protein belongs to the aconitase/IPM isomerase family. LeuC type 1 subfamily. In terms of assembly, heterodimer of LeuC and LeuD. [4Fe-4S] cluster serves as cofactor.

The enzyme catalyses (2R,3S)-3-isopropylmalate = (2S)-2-isopropylmalate. It functions in the pathway amino-acid biosynthesis; L-leucine biosynthesis; L-leucine from 3-methyl-2-oxobutanoate: step 2/4. Catalyzes the isomerization between 2-isopropylmalate and 3-isopropylmalate, via the formation of 2-isopropylmaleate. This chain is 3-isopropylmalate dehydratase large subunit, found in Sorangium cellulosum (strain So ce56) (Polyangium cellulosum (strain So ce56)).